The following is a 296-amino-acid chain: GTPase Era (296 aa).

An Era-type G domain is found at lysine 3–glutamate 170. The tract at residues glycine 11–serine 18 is G1. Glycine 11 to serine 18 is a GTP binding site. Residues glutamine 37–asparagine 41 are G2. The segment at aspartate 58–glycine 61 is G3. Residues aspartate 58 to methionine 62 and asparagine 120 to aspartate 123 contribute to the GTP site. Residues asparagine 120–aspartate 123 form a G4 region. The segment at isoleucine 149–alanine 151 is G5. A KH type-2 domain is found at leucine 201 to lysine 277.

Belongs to the TRAFAC class TrmE-Era-EngA-EngB-Septin-like GTPase superfamily. Era GTPase family. Monomer.

It is found in the cytoplasm. It localises to the cell membrane. Its function is as follows. An essential GTPase that binds both GDP and GTP, with rapid nucleotide exchange. Plays a role in 16S rRNA processing and 30S ribosomal subunit biogenesis and possibly also in cell cycle regulation and energy metabolism. The sequence is that of GTPase Era from Clostridium acetobutylicum (strain ATCC 824 / DSM 792 / JCM 1419 / IAM 19013 / LMG 5710 / NBRC 13948 / NRRL B-527 / VKM B-1787 / 2291 / W).